A 216-amino-acid polypeptide reads, in one-letter code: MSCLPALDKFLQNYHQAYLTTLGELPRYYPQGEPSVCIQGEFFADSDKPIAWQPVKRDEVGSFTNVEHALDLPLWPDIHLFYGQYFSAPLLFDSKWGTGELLQVWNDDDFKCLQQNVIGHLMMKKKLKQPPTWFIGLLDEGDKMLTINNSDGSVWIEIPGEEQSEQLSTSLTAFIEALSPRIAPPVKHEELPMPALDHPGIFANIKRMWQNLFGKG.

Belongs to the Syd family.

The protein localises to the cell inner membrane. Functionally, interacts with the SecY protein in vivo. May bind preferentially to an uncomplexed state of SecY, thus functioning either as a chelating agent for excess SecY in the cell or as a regulatory factor that negatively controls the translocase function. This is Protein Syd from Shewanella sp. (strain W3-18-1).